Consider the following 669-residue polypeptide: Epithelial sodium channel subunit gamma (669 aa).

Over 1 to 67 the chain is Cytoplasmic; that stretch reads MAPPYHGDTR…VVSRGRLRKF (67 aa). A helical membrane pass occupies residues 68–88; it reads IWILLTLSAVGLILWQCAELI. Over 89–551 the chain is Extracellular; it reads MSYYTASVSV…VILLSNFGGQ (463 aa). Intrachain disulfides connect cysteine 113–cysteine 300, cysteine 223–cysteine 231, cysteine 277–cysteine 284, cysteine 389–cysteine 474, cysteine 411–cysteine 470, cysteine 415–cysteine 466, cysteine 424–cysteine 451, and cysteine 426–cysteine 440. The helical transmembrane segment at 552 to 572 threads the bilayer; the sequence is LGLWMSCSMVCVIEIIEVFFI. Over 573–669 the chain is Cytoplasmic; the sequence is DSFSIVMRRR…LPDTLEGRSH (97 aa). Positions 592-619 are disordered; sequence DRKAPRPQEPPQVNAPAKEGHDNPVCTD.

The protein belongs to the amiloride-sensitive sodium channel (TC 1.A.6) family. SCNN1G subfamily. As to quaternary structure, component of the heterotrimeric epithelial sodium channel (ENaC) composed of an alpha/SCNN1A, a beta/SCNN1B and a gamma/SCNN1G subunit.

The protein localises to the apical cell membrane. The catalysed reaction is Na(+)(in) = Na(+)(out). Originally identified and characterized by its inhibition by the diuretic drug amiloride. This is one of the three pore-forming subunits of the heterotrimeric epithelial sodium channel (ENaC), a critical regulator of sodium balance and fluid homeostasis. ENaC operates in epithelial tissues, where it mediates the electrodiffusion of sodium ions from extracellular fluid through the apical membrane of cells, with water following osmotically. In Pelodiscus sinensis (Chinese softshell turtle), this protein is Epithelial sodium channel subunit gamma.